A 241-amino-acid polypeptide reads, in one-letter code: tRNA pseudouridine synthase B (241 aa).

Catalysis depends on Asp45, which acts as the Nucleophile.

The protein belongs to the pseudouridine synthase TruB family. Type 1 subfamily.

It carries out the reaction uridine(55) in tRNA = pseudouridine(55) in tRNA. Its function is as follows. Responsible for synthesis of pseudouridine from uracil-55 in the psi GC loop of transfer RNAs. The sequence is that of tRNA pseudouridine synthase B from Chlamydia muridarum (strain MoPn / Nigg).